A 950-amino-acid polypeptide reads, in one-letter code: 5'-3' exoribonuclease 2 (950 aa).

The CCHC-type zinc-finger motif lies at 262-278 (PCGLCNQFGHEVKDCEG). At K286 the chain carries N6-acetyllysine. The segment at 408–508 (KDDEDSFRRR…SDSEPEPEDN (101 aa)) is disordered. Basic residues predominate over residues 416–426 (RRQKEKRKRMK). The residue at position 439 (T439) is a Phosphothreonine. A compositionally biased stretch (polar residues) spans 445 to 458 (SRNSPGSQVASNPR). 9 positions are modified to phosphoserine: S448, S471, S473, S475, S482, S487, S499, S501, and S678. A compositionally biased stretch (low complexity) spans 468–482 (NNSSPSISPNTSFTS). Asymmetric dimethylarginine; alternate occurs at positions 824, 847, and 851. R824, R847, and R851 each carry omega-N-methylarginine; alternate. Residue R880 is modified to Asymmetric dimethylarginine. Asymmetric dimethylarginine; alternate is present on R883. At R883 the chain carries Omega-N-methylarginine; alternate. R895 carries the omega-N-methylarginine modification. Residues 911 to 950 (MLAGPGGYPPRRDDRGGRQGYPREGRKYPLPPPSGRYNWN) are disordered. Residues 920–937 (PRRDDRGGRQGYPREGRK) are compositionally biased toward basic and acidic residues. Position 946 is an asymmetric dimethylarginine; alternate (R946). R946 is modified (omega-N-methylarginine; alternate).

This sequence belongs to the 5'-3' exonuclease family. XRN2/RAT1 subfamily. Interacts with POLR2A and SMN1/SMN2. Interacts with CDKN2AIP and NKRF. Interacts with CDKN2AIPNL; the interaction is direct. Interacts with TRIM71 (via NHL repeats) in an RNA-dependent manner. Interacts with DHX34; the interaction is RNA-independent. As to expression, expressed in the spleen, thymus, prostate, testis, ovary, small intestine, colon, peripheral blood leukocytes, heart, brain, placenta, lung, liver, skeletal muscle, kidney, and pancreas. Isoform 2 is expressed predominantly in peripheral blood leukocytes.

The protein localises to the nucleus. It localises to the nucleolus. In terms of biological role, possesses 5'-&gt;3' exoribonuclease activity. May promote the termination of transcription by RNA polymerase II. During transcription termination, cleavage at the polyadenylation site liberates a 5' fragment which is subsequently processed to form the mature mRNA and a 3' fragment which remains attached to the elongating polymerase. The processive degradation of this 3' fragment by this protein may promote termination of transcription. Binds to RNA polymerase II (RNAp II) transcription termination R-loops formed by G-rich pause sites. This is 5'-3' exoribonuclease 2 (XRN2) from Homo sapiens (Human).